Here is a 260-residue protein sequence, read N- to C-terminus: Ribosomal RNA small subunit methyltransferase G (260 aa).

Residues Gly111, Phe116, and Arg181 each coordinate S-adenosyl-L-methionine.

It belongs to the methyltransferase superfamily. RNA methyltransferase RsmG family.

The protein resides in the cytoplasm. It carries out the reaction guanosine(527) in 16S rRNA + S-adenosyl-L-methionine = N(7)-methylguanosine(527) in 16S rRNA + S-adenosyl-L-homocysteine. Functionally, specifically methylates the N7 position of guanine in position 527 of 16S rRNA. The polypeptide is Ribosomal RNA small subunit methyltransferase G (Nitrobacter hamburgensis (strain DSM 10229 / NCIMB 13809 / X14)).